The following is a 292-amino-acid chain: Tumor necrosis factor receptor type 1-associated DEATH domain protein (292 aa).

The short motif at 148–164 (LRDDEIAELDQQLQSQA) is the Nuclear export signal element. One can recognise a Death domain in the interval 199-289 (AAGDLQRFSN…SLAENILDIQ (91 aa)). A Nuclear localization signal motif is present at residues 215–228 (RKVGRALGKNCRAL).

In terms of assembly, heterodimer with tnfrsf1a.

It is found in the nucleus. The protein localises to the cytoplasm. The protein resides in the cytoskeleton. Its function is as follows. Adapter molecule for tnfrsf1a that specifically associates with the cytoplasmic domain of activated tnfrsf1a mediating its interaction with fadd. In Oncorhynchus mykiss (Rainbow trout), this protein is Tumor necrosis factor receptor type 1-associated DEATH domain protein (tradd).